Here is a 317-residue protein sequence, read N- to C-terminus: Inositol oxygenase 4 (317 aa).

Substrate contacts are provided by residues Arg58 and 115–117 (DES). Fe cation is bound by residues His128, His153, and Asp154. Substrate contacts are provided by residues Lys157 and 174–175 (GD). Fe cation is bound by residues His226, His252, and Asp285. 252–253 (HS) contributes to the substrate binding site.

Belongs to the myo-inositol oxygenase family. The cofactor is Fe cation. As to expression, expressed in flowers, leaves, siliques, and to a lesser extent in roots.

The protein localises to the cytoplasm. It carries out the reaction myo-inositol + O2 = D-glucuronate + H2O + H(+). It functions in the pathway polyol metabolism; myo-inositol degradation into D-glucuronate; D-glucuronate from myo-inositol: step 1/1. Functionally, catalyzes the oxygenative cleavage of myo-inositol to D-glucuronate. Involved in the biosynthesis of UDP-glucuronic acid (UDP-GlcA), providing nucleotide sugars for cell-wall polymers. May be also involved in plant ascorbate biosynthesis. This chain is Inositol oxygenase 4 (MIOX4), found in Arabidopsis thaliana (Mouse-ear cress).